Reading from the N-terminus, the 861-residue chain is Leucine--tRNA ligase (861 aa).

Positions 42–52 (PYPSGRIHMGH) match the 'HIGH' region motif. Residues 623–627 (KMSKS) carry the 'KMSKS' region motif. Lysine 626 is an ATP binding site.

The protein belongs to the class-I aminoacyl-tRNA synthetase family.

It localises to the cytoplasm. It catalyses the reaction tRNA(Leu) + L-leucine + ATP = L-leucyl-tRNA(Leu) + AMP + diphosphate. This chain is Leucine--tRNA ligase, found in Caulobacter vibrioides (strain ATCC 19089 / CIP 103742 / CB 15) (Caulobacter crescentus).